The sequence spans 2273 residues: Acetyl-CoA carboxylase, mitochondrial (2273 aa).

The transit peptide at 1-104 directs the protein to the mitochondrion; it reads KGKTITHGQS…RGNIHKHTRL (104 aa). The Biotin carboxylation domain occupies 134–635; sequence VISKILIANN…STGWLDDLIL (502 aa). The region spanning 292-484 is the ATP-grasp domain; that stretch reads KTNFVSVPDD…LPATQLQIAM (193 aa). 332–337 provides a ligand contact to ATP; it reads GGGGKG. R459 is an active-site residue. The Biotinyl-binding domain maps to 763–837; that stretch reads LEAELNPTQV…EAGDVIAKLT (75 aa). K804 is subject to N6-biotinyllysine. The 336-residue stretch at 1532-1867 folds into the CoA carboxyltransferase N-terminal domain; sequence PYSVKDWLQP…KRDMSPPLLE (336 aa). Residues 1532 to 2187 form a carboxyltransferase region; that stretch reads PYSVKDWLQP…EGQVIKRLQK (656 aa). R1776, K2080, and R2082 together coordinate CoA. Positions 1871 to 2187 constitute a CoA carboxyltransferase C-terminal domain; sequence RWDRDVDFKP…EGQVIKRLQK (317 aa).

Biotin is required as a cofactor.

It localises to the mitochondrion. The catalysed reaction is hydrogencarbonate + acetyl-CoA + ATP = malonyl-CoA + ADP + phosphate + H(+). The enzyme catalyses N(6)-biotinyl-L-lysyl-[protein] + hydrogencarbonate + ATP = N(6)-carboxybiotinyl-L-lysyl-[protein] + ADP + phosphate + H(+). Its pathway is lipid metabolism; malonyl-CoA biosynthesis; malonyl-CoA from acetyl-CoA: step 1/1. Functionally, catalyzes the rate-limiting reaction in the mitochondrial fatty acid synthesis (FAS) type II pathway. Responsible for the production of the mitochondrial malonyl-CoA, used for the biosynthesis of the cofactor lipoic acid. This protein carries three functions: biotin carboxyl carrier protein, biotin carboxylase, and carboxyltransferase. The sequence is that of Acetyl-CoA carboxylase, mitochondrial (HFA1) from Saccharomyces cerevisiae (strain JAY291) (Baker's yeast).